Here is a 1837-residue protein sequence, read N- to C-terminus: Nucleoporin nup211 (1837 aa).

3 coiled-coil regions span residues E59–I378, Y415–L519, and V559–Y625. Phosphothreonine is present on T650. Coiled-coil stretches lie at residues E661 to L1163, L1222 to H1637, and K1675 to T1712. The tract at residues K1464–T1521 is disordered. Positions H1468 to E1479 are enriched in polar residues. The span at Q1480–T1521 shows a compositional bias: basic and acidic residues. S1558 carries the post-translational modification Phosphoserine. At T1560 the chain carries Phosphothreonine. At S1563 the chain carries Phosphoserine. Disordered stretches follow at residues E1602–D1642 and E1700–K1837. Residues K1617–A1628 are compositionally biased toward basic and acidic residues. 4 stretches are compositionally biased toward polar residues: residues E1700–T1730, K1753–G1763, I1795–S1814, and G1827–K1837.

The protein resides in the cytoplasm. The protein localises to the nucleus. Functions as a component of the nuclear pore complex (NPC). NPC components, collectively referred to as nucleoporins (NUPs), can play the role of both NPC structural components and of docking or interaction partners for transiently associated nuclear transport factors. Active directional transport is assured by both, a Phe-Gly (FG) repeat affinity gradient for these transport factors across the NPC and a transport cofactor concentration gradient across the nuclear envelope. This chain is Nucleoporin nup211 (nup211), found in Schizosaccharomyces pombe (strain 972 / ATCC 24843) (Fission yeast).